Consider the following 150-residue polypeptide: 3-hydroxyacyl-[acyl-carrier-protein] dehydratase FabZ (150 aa).

His47 is a catalytic residue.

It belongs to the thioester dehydratase family. FabZ subfamily.

The protein localises to the cytoplasm. The enzyme catalyses a (3R)-hydroxyacyl-[ACP] = a (2E)-enoyl-[ACP] + H2O. Functionally, involved in unsaturated fatty acids biosynthesis. Catalyzes the dehydration of short chain beta-hydroxyacyl-ACPs and long chain saturated and unsaturated beta-hydroxyacyl-ACPs. The polypeptide is 3-hydroxyacyl-[acyl-carrier-protein] dehydratase FabZ (Verminephrobacter eiseniae (strain EF01-2)).